Consider the following 517-residue polypeptide: Endoglucanase A (517 aa).

An N-terminal signal peptide occupies residues 1-25; it reads MKRSLLKTCSIIAGATIIFSSLSIS. The active-site Proton donor is the E185. E309 (nucleophile) is an active-site residue. Residues 382-392 show a composition bias toward basic and acidic residues; sequence HPEATEDDKPS. The segment at 382 to 424 is disordered; sequence HPEATEDDKPSTDVTNPDSGNTKPDSGNTNPGTETTTPTDNEK. A compositionally biased stretch (polar residues) spans 393-407; the sequence is TDVTNPDSGNTKPDS. Low complexity predominate over residues 408 to 420; that stretch reads GNTNPGTETTTPT. Positions 416–517 constitute a CBM2 domain; the sequence is TTTPTDNEKI…VISNFEYKFD (102 aa).

Belongs to the glycosyl hydrolase 5 (cellulase A) family.

The catalysed reaction is Endohydrolysis of (1-&gt;4)-beta-D-glucosidic linkages in cellulose, lichenin and cereal beta-D-glucans.. Its function is as follows. Hydrolyzes barley beta-glucan, lichenan, carboxymethylcellulose and xylan. It shows preferential activity against the larger cellooligosaccharides (cellohexaose and cellopentaose); cellotetraose is the smallest substrate degraded completely. The chain is Endoglucanase A (celA) from Clostridium longisporum.